Consider the following 431-residue polypeptide: Serine hydroxymethyltransferase 2 (431 aa).

(6S)-5,6,7,8-tetrahydrofolate contacts are provided by residues Leu-131 and 135–137; that span reads GHL. N6-(pyridoxal phosphate)lysine is present on Lys-240.

It belongs to the SHMT family. As to quaternary structure, homodimer. Pyridoxal 5'-phosphate is required as a cofactor.

Its subcellular location is the cytoplasm. It catalyses the reaction (6R)-5,10-methylene-5,6,7,8-tetrahydrofolate + glycine + H2O = (6S)-5,6,7,8-tetrahydrofolate + L-serine. It participates in one-carbon metabolism; tetrahydrofolate interconversion. It functions in the pathway amino-acid biosynthesis; glycine biosynthesis; glycine from L-serine: step 1/1. Catalyzes the reversible interconversion of serine and glycine with tetrahydrofolate (THF) serving as the one-carbon carrier. This reaction serves as the major source of one-carbon groups required for the biosynthesis of purines, thymidylate, methionine, and other important biomolecules. Also exhibits THF-independent aldolase activity toward beta-hydroxyamino acids, producing glycine and aldehydes, via a retro-aldol mechanism. This Photobacterium profundum (strain SS9) protein is Serine hydroxymethyltransferase 2.